A 213-amino-acid polypeptide reads, in one-letter code: 3,4-dihydroxy-2-butanone 4-phosphate synthase (213 aa).

Residues 27-28 (RE), Asp32, 140-144 (RTGHT), and Glu164 each bind D-ribulose 5-phosphate. Residue Glu28 coordinates Mg(2+). His143 lines the Mg(2+) pocket.

Belongs to the DHBP synthase family. Homodimer. Mg(2+) serves as cofactor. It depends on Mn(2+) as a cofactor.

The enzyme catalyses D-ribulose 5-phosphate = (2S)-2-hydroxy-3-oxobutyl phosphate + formate + H(+). It participates in cofactor biosynthesis; riboflavin biosynthesis; 2-hydroxy-3-oxobutyl phosphate from D-ribulose 5-phosphate: step 1/1. Functionally, catalyzes the conversion of D-ribulose 5-phosphate to formate and 3,4-dihydroxy-2-butanone 4-phosphate. The chain is 3,4-dihydroxy-2-butanone 4-phosphate synthase from Agrobacterium fabrum (strain C58 / ATCC 33970) (Agrobacterium tumefaciens (strain C58)).